The following is an 83-amino-acid chain: Large ribosomal subunit protein bL27 (83 aa).

Belongs to the bacterial ribosomal protein bL27 family.

The polypeptide is Large ribosomal subunit protein bL27 (rpmA) (Thermotoga maritima (strain ATCC 43589 / DSM 3109 / JCM 10099 / NBRC 100826 / MSB8)).